The chain runs to 230 residues: MDLLPFLLDANLSATNPPAIPHWWKRQPLIPNLLSQELKNYLKLNVKEKNIQIADQVIIDETAGEVVIGANTRICHGAVIQGPVVIGANCLIGNYAFIRPGTIISNGVKIGFATEIKNAVIEAEATIGPQCFIADSVVANQAYLGAQVRTSNHRLDEQPVSVRTPEGIIATGCDKLGCYIGQRSRLGVQVIILPGRIISPNTQLGPRVIVERNLPTGTYSLRQELIRTGD.

This sequence belongs to the transferase hexapeptide repeat family.

This is an uncharacterized protein from Escherichia coli (strain K12).